Reading from the N-terminus, the 68-residue chain is uncharacterized protein (68 aa).

This is an uncharacterized protein from Escherichia coli O6:H1 (strain CFT073 / ATCC 700928 / UPEC).